Consider the following 503-residue polypeptide: ATP synthase subunit alpha (503 aa).

170–177 (GDKQTGKT) contributes to the ATP binding site.

Belongs to the ATPase alpha/beta chains family. As to quaternary structure, F-type ATPases have 2 components, CF(1) - the catalytic core - and CF(0) - the membrane proton channel. CF(1) has five subunits: alpha(3), beta(3), gamma(1), delta(1), epsilon(1). CF(0) has three main subunits: a(1), b(2) and c(9-12). The alpha and beta chains form an alternating ring which encloses part of the gamma chain. CF(1) is attached to CF(0) by a central stalk formed by the gamma and epsilon chains, while a peripheral stalk is formed by the delta and b chains.

The protein localises to the cell inner membrane. It catalyses the reaction ATP + H2O + 4 H(+)(in) = ADP + phosphate + 5 H(+)(out). In terms of biological role, produces ATP from ADP in the presence of a proton gradient across the membrane. The alpha chain is a regulatory subunit. This is ATP synthase subunit alpha from Helicobacter pylori (strain Shi470).